The chain runs to 59 residues: Large ribosomal subunit protein uL30 (59 aa).

It belongs to the universal ribosomal protein uL30 family. In terms of assembly, part of the 50S ribosomal subunit.

The protein is Large ribosomal subunit protein uL30 of Herminiimonas arsenicoxydans.